The following is a 339-amino-acid chain: Anthranilate phosphoribosyltransferase (339 aa).

Residues G86, 89 to 90, T94, 96 to 99, 114 to 122, and S126 contribute to the 5-phospho-alpha-D-ribose 1-diphosphate site; these read GD, NIST, and KHGNRGVSS. G86 contributes to the anthranilate binding site. S98 serves as a coordination point for Mg(2+). N117 lines the anthranilate pocket. R172 lines the anthranilate pocket. Residues D230 and E231 each contribute to the Mg(2+) site.

Belongs to the anthranilate phosphoribosyltransferase family. Homodimer. Requires Mg(2+) as cofactor.

It catalyses the reaction N-(5-phospho-beta-D-ribosyl)anthranilate + diphosphate = 5-phospho-alpha-D-ribose 1-diphosphate + anthranilate. The protein operates within amino-acid biosynthesis; L-tryptophan biosynthesis; L-tryptophan from chorismate: step 2/5. In terms of biological role, catalyzes the transfer of the phosphoribosyl group of 5-phosphorylribose-1-pyrophosphate (PRPP) to anthranilate to yield N-(5'-phosphoribosyl)-anthranilate (PRA). The protein is Anthranilate phosphoribosyltransferase of Photobacterium profundum (strain SS9).